A 453-amino-acid polypeptide reads, in one-letter code: Phenolic glucoside malonyltransferase 1 (453 aa).

His-165 serves as the catalytic Proton acceptor. The HXXXD motif signature appears at 165–169; it reads HVAGD. Residues Lys-254, His-266, and 268–269 contribute to the malonyl-CoA site; that span reads TS. Asp-394 acts as the Proton acceptor in catalysis. Residues 394–398 carry the DFGWG motif motif; the sequence is DFGWG.

The protein belongs to the plant acyltransferase family. Phenolic glucoside malonyltransferase subfamily. As to quaternary structure, monomer. Highly expressed in flower. Also expressed in flower bud, stem, root and leaf.

The catalysed reaction is a flavonol 3-O-beta-D-glucoside + malonyl-CoA = a flavonol 3-O-(6-O-malonyl-beta-D-glucoside) + CoA. The enzyme catalyses a flavonol 7-O-beta-D-glucoside + malonyl-CoA = a flavonol 7-O-(6-O-malonyl-beta-D-glucoside) + CoA. Its function is as follows. Malonyltransferase with broad substrate specificity acting on phenolic glucosides including xenobiotic naphthols. Has activity against flavonoid 7-O-glucosides, flavonoid 3-O-glucosides and naphthol glucosides, and to a lesser extent against coumarin glucosides in vitro. Prefers malonyl-CoA as an acyl donor, but also active with succinyl-CoA and methylmalonyl-CoA, but not with acetyl-CoA. This chain is Phenolic glucoside malonyltransferase 1, found in Nicotiana tabacum (Common tobacco).